The following is a 152-amino-acid chain: Small ribosomal subunit protein uS15 (152 aa).

Basic residues predominate over residues 1 to 11; sequence MAKMHTKRKGK. The tract at residues 1-22 is disordered; it reads MAKMHTKRKGKSSSTRPIRTEP.

Belongs to the universal ribosomal protein uS15 family. In terms of assembly, part of the 30S ribosomal subunit.

This Methanosarcina barkeri (strain Fusaro / DSM 804) protein is Small ribosomal subunit protein uS15.